Reading from the N-terminus, the 175-residue chain is ATP synthase subunit b (175 aa).

A helical transmembrane segment spans residues 20 to 40 (LIFWTAITFVIVLLILKKIAW).

This sequence belongs to the ATPase B chain family. F-type ATPases have 2 components, F(1) - the catalytic core - and F(0) - the membrane proton channel. F(1) has five subunits: alpha(3), beta(3), gamma(1), delta(1), epsilon(1). F(0) has four main subunits: a(1), b(2) and c(10-14). The alpha and beta chains form an alternating ring which encloses part of the gamma chain. F(1) is attached to F(0) by a central stalk formed by the gamma and epsilon chains, while a peripheral stalk is formed by the delta and b chains.

The protein localises to the cell inner membrane. Its function is as follows. F(1)F(0) ATP synthase produces ATP from ADP in the presence of a proton or sodium gradient. F-type ATPases consist of two structural domains, F(1) containing the extramembraneous catalytic core and F(0) containing the membrane proton channel, linked together by a central stalk and a peripheral stalk. During catalysis, ATP synthesis in the catalytic domain of F(1) is coupled via a rotary mechanism of the central stalk subunits to proton translocation. Functionally, component of the F(0) channel, it forms part of the peripheral stalk, linking F(1) to F(0). The protein is ATP synthase subunit b of Chlorobium chlorochromatii (strain CaD3).